We begin with the raw amino-acid sequence, 451 residues long: Tubulin gamma-2 chain (451 aa).

Phosphoserine; by BRSK1 is present on Ser131. Residue Ala142–Gly148 participates in GTP binding.

The protein belongs to the tubulin family. As to quaternary structure, component of the gamma-tubulin ring complex (gTuRC) consisting of TUBGCP2, TUBGCP3, TUBGCP4, TUBGCP5 and TUBGCP6 and gamma-tubulin TUBG1 or TUBG2. TUBGCP2, TUBGCP3, TUBGCP4, TUBGCP5 and TUBGCP6 assemble in a 5:5:2:1:1 stoichiometry; each is associated with a gamma-tubulin, thereby arranging 14 gamma-tubulins in a helical manner. Gamma-tubulin at the first position is blocked by TUBGCP3 at the last position, allowing 13 protafilaments to grow into a microtubule. Interacts with alpha-beta tubulin heterodimers; the interaction allows microtubules to nucleate from the gTuRC. Phosphorylation at Ser-131 by BRSK1 regulates centrosome duplication, possibly by mediating relocation of gamma-tubulin and its associated proteins from the cytoplasm to the centrosome.

It is found in the cytoplasm. Its subcellular location is the cytoskeleton. The protein resides in the microtubule organizing center. The protein localises to the centrosome. Tubulin is the major constituent of microtubules, protein filaments consisting of alpha- and beta-tubulin heterodimers. Gamma-tubulin is a key component of the gamma-tubulin ring complex (gTuRC) which mediates microtubule nucleation. The gTuRC regulates the minus-end nucleation of alpha-beta tubulin heterodimers that grow into microtubule protafilaments, a critical step in centrosome duplication and spindle formation. This chain is Tubulin gamma-2 chain (Tubg2), found in Mus musculus (Mouse).